The sequence spans 22 residues: Oxygen-evolving enhancer protein 2 (22 aa).

It belongs to the PsbP family.

It localises to the plastid. The protein localises to the chloroplast thylakoid membrane. May be involved in the regulation of photosystem II. This is Oxygen-evolving enhancer protein 2 from Physcomitrium patens (Spreading-leaved earth moss).